The sequence spans 187 residues: Elongation factor P (187 aa).

This sequence belongs to the elongation factor P family.

It is found in the cytoplasm. It participates in protein biosynthesis; polypeptide chain elongation. Its function is as follows. Involved in peptide bond synthesis. Stimulates efficient translation and peptide-bond synthesis on native or reconstituted 70S ribosomes in vitro. Probably functions indirectly by altering the affinity of the ribosome for aminoacyl-tRNA, thus increasing their reactivity as acceptors for peptidyl transferase. In Leifsonia xyli subsp. xyli (strain CTCB07), this protein is Elongation factor P.